The following is a 458-amino-acid chain: Adenylosuccinate synthetase (458 aa).

Residues 17–23 (GDEGKGK) and 45–47 (GHT) each bind GTP. The Proton acceptor role is filled by Asp-18. Residues Asp-18 and Gly-45 each coordinate Mg(2+). Residues 18–21 (DEGK), 43–46 (NAGH), Thr-137, Arg-151, Gln-247, Thr-262, and Arg-330 contribute to the IMP site. The active-site Proton donor is the His-46. A substrate-binding site is contributed by 326–332 (VTTGRSR). GTP-binding positions include Arg-332, 358-360 (KLD), and 440-442 (STS).

This sequence belongs to the adenylosuccinate synthetase family. Homodimer. Mg(2+) serves as cofactor.

The protein localises to the cytoplasm. The enzyme catalyses IMP + L-aspartate + GTP = N(6)-(1,2-dicarboxyethyl)-AMP + GDP + phosphate + 2 H(+). Its pathway is purine metabolism; AMP biosynthesis via de novo pathway; AMP from IMP: step 1/2. Functionally, plays an important role in the de novo pathway of purine nucleotide biosynthesis. Catalyzes the first committed step in the biosynthesis of AMP from IMP. This chain is Adenylosuccinate synthetase, found in Delftia acidovorans (strain DSM 14801 / SPH-1).